We begin with the raw amino-acid sequence, 347 residues long: Guanine nucleotide-binding protein alpha-5 subunit (347 aa).

G2 carries the N-myristoyl glycine lipid modification. C3 is lipidated: S-palmitoyl cysteine. In terms of domain architecture, G-alpha spans 27–347; sequence NETKLLLLGP…KNIFNTIINY (321 aa). Positions 30–43 are G1 motif; sequence KLLLLGPGESGKST. GTP-binding positions include 35–42, 170–176, 195–199, 264–267, and A319; these read GPGESGKS, LRSRVRT, DVGGQ, and NKVD. The Mg(2+) site is built by S42 and T176. The interval 168 to 176 is G2 motif; the sequence is DVLRSRVRT. Positions 191–200 are G3 motif; the sequence is FRMLDVGGQR. The segment at 260–267 is G4 motif; that stretch reads IIFFNKVD. The interval 317 to 322 is G5 motif; sequence TCAIDT.

It belongs to the G-alpha family. G(q) subfamily. As to quaternary structure, g proteins are composed of 3 units; alpha, beta and gamma. The alpha chain contains the guanine nucleotide binding site.

Its function is as follows. Guanine nucleotide-binding proteins (G proteins) are involved as modulators or transducers in various transmembrane signaling systems. The sequence is that of Guanine nucleotide-binding protein alpha-5 subunit (gpaE) from Dictyostelium discoideum (Social amoeba).